A 29-amino-acid polypeptide reads, in one-letter code: Cytochrome b6-f complex subunit 8 (29 aa).

A helical transmembrane segment spans residues 3-23 (IISLGWSSLLVVFTFSLSLVV).

Belongs to the PetN family. In terms of assembly, the 4 large subunits of the cytochrome b6-f complex are cytochrome b6, subunit IV (17 kDa polypeptide, PetD), cytochrome f and the Rieske protein, while the 4 small subunits are PetG, PetL, PetM and PetN. The complex functions as a dimer.

The protein localises to the plastid. It is found in the chloroplast thylakoid membrane. Functionally, component of the cytochrome b6-f complex, which mediates electron transfer between photosystem II (PSII) and photosystem I (PSI), cyclic electron flow around PSI, and state transitions. In Rhodomonas salina (Cryptomonas salina), this protein is Cytochrome b6-f complex subunit 8.